Here is a 113-residue protein sequence, read N- to C-terminus: Na(+)/H(+) antiporter subunit C1 (113 aa).

The next 3 helical transmembrane spans lie at 1–21, 28–48, and 72–92; these read MEII…YLVL, IVMG…TMGG, and LILT…VLAF.

Belongs to the CPA3 antiporters (TC 2.A.63) subunit C family. May form a heterooligomeric complex that consists of seven subunits: mnhA1, mnhB1, mnhC1, mnhD1, mnhE1, mnhF1 and mnhG1.

It is found in the cell membrane. Functionally, mnh complex is a Na(+)/H(+) antiporter involved in Na(+) excretion. The polypeptide is Na(+)/H(+) antiporter subunit C1 (mnhC1) (Staphylococcus haemolyticus (strain JCSC1435)).